The chain runs to 238 residues: Small ribosomal subunit protein uS2c (238 aa).

Belongs to the universal ribosomal protein uS2 family.

It localises to the plastid. The protein localises to the chloroplast. This is Small ribosomal subunit protein uS2c (rps2) from Oltmannsiellopsis viridis (Marine flagellate).